Here is a 202-residue protein sequence, read N- to C-terminus: Small ribosomal subunit protein uS5 (202 aa).

The region spanning 50-113 is the S5 DRBM domain; sequence LKQELLNLNL…REAKLNITPV (64 aa).

This sequence belongs to the universal ribosomal protein uS5 family. In terms of assembly, part of the 30S ribosomal subunit. Contacts protein S4.

Its function is as follows. With S4 and S12 plays an important role in translational accuracy. This Pyrobaculum calidifontis (strain DSM 21063 / JCM 11548 / VA1) protein is Small ribosomal subunit protein uS5.